Reading from the N-terminus, the 283-residue chain is D-alanine aminotransferase (283 aa).

Residue tyrosine 31 participates in substrate binding. Arginine 50 lines the pyridoxal 5'-phosphate pocket. Positions 98 and 100 each coordinate substrate. The active-site Proton acceptor is lysine 144. An N6-(pyridoxal phosphate)lysine modification is found at lysine 144. Residue glutamate 176 coordinates pyridoxal 5'-phosphate.

This sequence belongs to the class-IV pyridoxal-phosphate-dependent aminotransferase family. Homodimer. Pyridoxal 5'-phosphate serves as cofactor.

It carries out the reaction D-alanine + 2-oxoglutarate = D-glutamate + pyruvate. Functionally, acts on the D-isomers of alanine, leucine, aspartate, glutamate, aminobutyrate, norvaline and asparagine. The enzyme transfers an amino group from a substrate D-amino acid to the pyridoxal phosphate cofactor to form pyridoxamine and an alpha-keto acid in the first half-reaction. The second half-reaction is the reverse of the first, transferring the amino group from the pyridoxamine to a second alpha-keto acid to form the product D-amino acid via a ping-pong mechanism. This is an important process in the formation of D-alanine and D-glutamate, which are essential bacterial cell wall components. This is D-alanine aminotransferase (dat) from Bacillus licheniformis.